Consider the following 78-residue polypeptide: MSNKGQTLQDPFLNTLRKEHVPVSIYLVNGIKLQGQIESFDQYVVLLRNTVTQMVYKHAISTVVPARAVSFQVEVPAE.

The Sm domain maps to D10–V69.

Belongs to the Hfq family. In terms of assembly, homohexamer.

RNA chaperone that binds small regulatory RNA (sRNAs) and mRNAs to facilitate mRNA translational regulation in response to envelope stress, environmental stress and changes in metabolite concentrations. Also binds with high specificity to tRNAs. The sequence is that of RNA-binding protein Hfq from Bordetella avium (strain 197N).